A 283-amino-acid polypeptide reads, in one-letter code: Pantothenate synthetase (283 aa).

26-33 serves as a coordination point for ATP; that stretch reads MGNLHEGH. Catalysis depends on histidine 33, which acts as the Proton donor. Glutamine 57 serves as a coordination point for (R)-pantoate. A beta-alanine-binding site is contributed by glutamine 57. Residue 144-147 participates in ATP binding; that stretch reads GKKD. Glutamine 150 is a binding site for (R)-pantoate. Residue 181 to 184 participates in ATP binding; sequence LSSR.

It belongs to the pantothenate synthetase family. In terms of assembly, homodimer.

The protein resides in the cytoplasm. It catalyses the reaction (R)-pantoate + beta-alanine + ATP = (R)-pantothenate + AMP + diphosphate + H(+). It functions in the pathway cofactor biosynthesis; (R)-pantothenate biosynthesis; (R)-pantothenate from (R)-pantoate and beta-alanine: step 1/1. In terms of biological role, catalyzes the condensation of pantoate with beta-alanine in an ATP-dependent reaction via a pantoyl-adenylate intermediate. The protein is Pantothenate synthetase of Variovorax paradoxus (strain S110).